A 183-amino-acid polypeptide reads, in one-letter code: ATP-dependent protease subunit HslV (183 aa).

Residue threonine 2 is part of the active site. 3 residues coordinate Na(+): alanine 157, cysteine 160, and threonine 163.

Belongs to the peptidase T1B family. HslV subfamily. In terms of assembly, a double ring-shaped homohexamer of HslV is capped on each side by a ring-shaped HslU homohexamer. The assembly of the HslU/HslV complex is dependent on binding of ATP.

The protein resides in the cytoplasm. It catalyses the reaction ATP-dependent cleavage of peptide bonds with broad specificity.. Its activity is regulated as follows. Allosterically activated by HslU binding. Protease subunit of a proteasome-like degradation complex believed to be a general protein degrading machinery. The sequence is that of ATP-dependent protease subunit HslV from Marinomonas sp. (strain MWYL1).